We begin with the raw amino-acid sequence, 384 residues long: Intraflagellar transport protein 46 homolog (384 aa).

Disordered regions lie at residues Val-52 to Tyr-151 and Ser-358 to Asp-384. Positions Glu-87–Pro-99 are enriched in basic and acidic residues. Acidic residues predominate over residues Asp-110 to Pro-138. Residues Ser-358–Ala-374 show a composition bias toward polar residues.

The protein belongs to the IFT46 family.

It localises to the cytoplasm. It is found in the cytoskeleton. Its subcellular location is the cilium basal body. The protein localises to the cell projection. The protein resides in the cilium. In terms of biological role, forms part of a complex involved in intraflagellar transport (IFT), the bi-directional movement of particles required for the assembly, maintenance and functioning of primary cilia. Plays a role in early embryonic development. This is Intraflagellar transport protein 46 homolog from Danio rerio (Zebrafish).